The following is a 270-amino-acid chain: Cyclohexanol dehydrogenase (270 aa).

NAD(+) contacts are provided by Arg-19, Asp-40, Asp-78, Val-79, Asn-105, Tyr-176, Lys-180, Ile-209, and Thr-211. Catalysis depends on Tyr-176, which acts as the Proton acceptor.

It belongs to the short-chain dehydrogenases/reductases (SDR) family. In terms of assembly, homodimer.

The protein resides in the cytoplasm. It carries out the reaction cyclohexanol + NAD(+) = cyclohexanone + NADH + H(+). Its activity is regulated as follows. Activity is enhanced by the addition of Ba(2+) and Mg(2+), but inhibited by the addition of Al(3+), Ca(2+), Co(2+), Cu(2+), Mn(2+) and Zn(2+). In terms of biological role, catalyzes the oxidation of cyclohexanol to cyclohexanone. Can also use a broad range of other alcohols, including trans-cyclohexane-1,2-diol, trans-cyclopentane-1,2-diol, cyclopentanol, hexane-1,2-diol, ethanol, 1-propanol, 1-butanol, 1-pentanol and 1-hexanol. This Rhodococcus sp. (strain TK6) protein is Cyclohexanol dehydrogenase.